A 643-amino-acid chain; its full sequence is Replication protein E1 (643 aa).

The short motif at 81–83 (KRK) is the Nuclear localization signal element. 3 positions are modified to phosphoserine; by host: Ser-87, Ser-91, and Ser-105. Positions 104 to 113 (ISPRLDAITL) match the Nuclear export signal motif. Positions 130–166 (LTDSGYGNTEVEAETQVERNGEPEDCGGGGQGRDTEG) are disordered. Residues 181–347 (QQHTGTTRVL…QTIVEHGLAD (167 aa)) are DNA-binding region. Residues 446-596 (IEFIPFLTKL…FPFDRNGNAL (151 aa)) form the SF3 helicase domain. ATP is bound at residue 472 to 479 (GPPDTGKS). Residue Lys-553 forms a Glycyl lysine isopeptide (Lys-Gly) (interchain with G-Cter in SUMO) linkage.

This sequence belongs to the papillomaviridae E1 protein family. As to quaternary structure, can form hexamers. Interacts with E2 protein; this interaction increases E1 DNA binding specificity. Interacts with host DNA polymerase subunit POLA2. Interacts with host single stranded DNA-binding protein RPA1. Interacts with host TOP1; this interaction stimulates the enzymatic activity of TOP1. Post-translationally, phosphorylated. Sumoylated.

It is found in the host nucleus. It carries out the reaction Couples ATP hydrolysis with the unwinding of duplex DNA by translocating in the 3'-5' direction.. The enzyme catalyses ATP + H2O = ADP + phosphate + H(+). Functionally, ATP-dependent DNA 3'-5' helicase required for initiation of viral DNA replication. It forms a complex with the viral E2 protein. The E1-E2 complex binds to the replication origin which contains binding sites for both proteins. During the initial step, a dimer of E1 interacts with a dimer of protein E2 leading to a complex that binds the viral origin of replication with high specificity. Then, a second dimer of E1 displaces the E2 dimer in an ATP-dependent manner to form the E1 tetramer. Following this, two E1 monomers are added to each half of the site, which results in the formation of two E1 trimers on the viral ori. Subsequently, two hexamers will be created. The double hexamer acts as a bi-directional helicase machinery and unwinds the viral DNA and then recruits the host DNA polymerase to start replication. The protein is Replication protein E1 of Homo sapiens (Human).